The chain runs to 316 residues: MSQNGIFPDILTATALVHMYSKSGNFERATEAFENLKSYGLRPDEKIYEAMILGYVNAGKPKLGERLMKEMQAKELKASEEVYMALLRAYAQMGDANGAAGISSSMQYASDGPLSFEAYSLFVEAYGKAGQVDKAKSNFDEMRKLGHKPDDKCIANLVRAYKGENSLDKALRLLLQLEKDGIEIGVITYTVLVDWMANLGLIEEAEQLLVKISQLGEAPPFELQVSLCCMYSGVRNEKKTLQALGVLEAKRDQMGPNEFDKVISALKRGGFEKDARRMYKYMEARKFLPSQRLQMDMVAPPRAFGSGSGRVRRFNS.

6 PPR repeats span residues 9 to 43 (DILTATALVHMYSKSGNFERATEAFENLKSYGLRP), 44 to 78 (DEKIYEAMILGYVNAGKPKLGERLMKEMQAKELKA), 79 to 113 (SEEVYMALLRAYAQMGDANGAAGISSSMQYASDGP), 115 to 149 (SFEAYSLFVEAYGKAGQVDKAKSNFDEMRKLGHKP), 150 to 184 (DDKCIANLVRAYKGENSLDKALRLLLQLEKDGIEI), and 185 to 219 (GVITYTVLVDWMANLGLIEEAEQLLVKISQLGEAP).

The protein belongs to the PPR family. P subfamily.

This chain is Pentatricopeptide repeat-containing protein At1g19525, found in Arabidopsis thaliana (Mouse-ear cress).